Consider the following 672-residue polypeptide: ABC transporter G family member 21 (672 aa).

Over residues 1-35 the composition is skewed to polar residues; that stretch reads MMPPNEQESSFPKTPSANRHETSPVQENRFSSPSH. Residues 1–59 form a disordered region; the sequence is MMPPNEQESSFPKTPSANRHETSPVQENRFSSPSHVNPCLDDDNDHDGPSHQSRQSSVL. Low complexity predominate over residues 50-59; sequence SHQSRQSSVL. In terms of domain architecture, ABC transporter spans 68–322; that stretch reads LKFEELTYSI…FGSIGYQPGS (255 aa). 117–124 serves as a coordination point for ATP; sequence GPSGSGKT. Positions 411 to 617 constitute an ABC transmembrane type-2 domain; it reads MQFSVLLKRG…CYKLLVGVQY (207 aa). Transmembrane regions (helical) follow at residues 429-449, 460-480, 512-532, 543-563, 576-596, and 649-669; these read FSGL…LLWW, VGLL…NAIF, LPME…MGGL, LMIV…LGAI, VLML…PGFI, and WDVL…YLAL.

It belongs to the ABC transporter superfamily. ABCG family. Eye pigment precursor importer (TC 3.A.1.204) subfamily.

Its subcellular location is the membrane. This Arabidopsis thaliana (Mouse-ear cress) protein is ABC transporter G family member 21 (ABCG21).